We begin with the raw amino-acid sequence, 37 residues long: Cytochrome b6-f complex subunit 5 (37 aa).

A helical transmembrane segment spans residues 5 to 25; it reads LLSGIVLGLVPITLAGLFVTA.

It belongs to the PetG family. As to quaternary structure, the 4 large subunits of the cytochrome b6-f complex are cytochrome b6, subunit IV (17 kDa polypeptide, PetD), cytochrome f and the Rieske protein, while the 4 small subunits are PetG, PetL, PetM and PetN. The complex functions as a dimer.

It is found in the plastid. Its subcellular location is the chloroplast thylakoid membrane. Functionally, component of the cytochrome b6-f complex, which mediates electron transfer between photosystem II (PSII) and photosystem I (PSI), cyclic electron flow around PSI, and state transitions. PetG is required for either the stability or assembly of the cytochrome b6-f complex. The polypeptide is Cytochrome b6-f complex subunit 5 (Gnetum parvifolium (Small-leaved jointfir)).